The sequence spans 280 residues: NLP effector protein Pc553546 (280 aa).

Residues 1–19 (MNLVAALVLCFALLSSVRG) form the signal peptide. A Hepta-peptide GHRHDWE motif motif is present at residues 123 to 129 (AGRHDWA). Residues N142 and N209 are each glycosylated (N-linked (GlcNAc...) asparagine).

This sequence belongs to the Necrosis inducing protein (NPP1) family.

It localises to the secreted. Secreted effector that contributes strongly to virulence during infection by P.capsici. In Phytophthora capsici, this protein is NLP effector protein Pc553546.